Reading from the N-terminus, the 83-residue chain is MKTSMFLTLTGLVLLFVDCYASESEEKEFPKELLSSIFAADSDFKVEERGCLGDKCDYNNGCCSGYVCSRTWKWCVLAGPWRR.

The first 21 residues, 1 to 21 (MKTSMFLTLTGLVLLFVDCYA), serve as a signal peptide directing secretion. Positions 22–49 (SESEEKEFPKELLSSIFAADSDFKVEER) are excised as a propeptide. 3 disulfides stabilise this stretch: Cys-51–Cys-63, Cys-56–Cys-68, and Cys-62–Cys-75.

This sequence belongs to the neurotoxin 10 (Hwtx-1) family. 51 (Hntx-8) subfamily. Hntx-8 sub-subfamily. In terms of tissue distribution, expressed by the venom gland.

The protein localises to the secreted. Functionally, agglutinates erythrocytes. In Cyriopagopus schmidti (Chinese bird spider), this protein is U5-theraphotoxin-Hs1a 4.